The chain runs to 252 residues: uncharacterized protein (252 aa).

6 helical membrane-spanning segments follow: residues 5–25 (LTSLITQSLTFSILIVGIVSF), 29–49 (LALVGLLLPGIVFMATLGTFI), 61–81 (IAGIIGCLLGDWCSYFIGLYF), 141–161 (ILPSLLGCILWPPIYFFPGII), 179–199 (WLLLIIAILIWFGIWLTSKWW), and 217–237 (IGWIALIILSSGIIGLILIQF).

This sequence belongs to the DedA family.

The protein localises to the cell membrane. This is an uncharacterized protein from Buchnera aphidicola subsp. Schizaphis graminum (strain Sg).